Consider the following 183-residue polypeptide: Adenine phosphoribosyltransferase (183 aa).

The protein belongs to the purine/pyrimidine phosphoribosyltransferase family. In terms of assembly, homodimer.

It is found in the cytoplasm. The enzyme catalyses AMP + diphosphate = 5-phospho-alpha-D-ribose 1-diphosphate + adenine. Its pathway is purine metabolism; AMP biosynthesis via salvage pathway; AMP from adenine: step 1/1. In terms of biological role, catalyzes a salvage reaction resulting in the formation of AMP, that is energically less costly than de novo synthesis. This is Adenine phosphoribosyltransferase from Shewanella oneidensis (strain ATCC 700550 / JCM 31522 / CIP 106686 / LMG 19005 / NCIMB 14063 / MR-1).